The sequence spans 260 residues: MLEINYDTKLLGVVGENISYTLSPAIHNYSFQELGINAVYLAFDIKSDEFKEIFPGLVKIAYGLNITIPYKEIAIKYVEAQSEAKRIGAINTIFNGKGYNTDYIAIKSLVQERIDKFETCTIFGAGGAARAAIFALHDLDCSINVINRSKEKAEKLIEEMRNKNIEIKITYNCKSDIIVNSTPNPDFVPDECVNGKLVIDFVYKPVITSLIKRAQNKNIKTINGIEILVRQAMEAEKIWFGKSLEDEEVVNYLYARKLIW.

Catalysis depends on K71, which acts as the Proton acceptor. Residue 124–128 (GAGGA) participates in NADP(+) binding.

It belongs to the shikimate dehydrogenase family.

It carries out the reaction shikimate + NADP(+) = 3-dehydroshikimate + NADPH + H(+). It functions in the pathway metabolic intermediate biosynthesis; chorismate biosynthesis; chorismate from D-erythrose 4-phosphate and phosphoenolpyruvate: step 4/7. This chain is Shikimate dehydrogenase (aroE), found in Sulfurisphaera tokodaii (strain DSM 16993 / JCM 10545 / NBRC 100140 / 7) (Sulfolobus tokodaii).